The primary structure comprises 959 residues: MVFCTYCGHSFTRDEHLERHILTHTNVKPFKCFTCHMSFARRDLLQGHYTVHGRNQDQQEIPAANGMIPKSAGRTPIACSNCAKTKTKCDKKFPCSRCASRNLRCTLRPTLVSTKNAARMGLITPETIAQDIANGTLPPDQTVAAEKVPLPIAPTGHVEESSKSSSPSGSPTSISHNSTGSDAPPAPMFDQFNGCPTPPQGLSPTTPSGQGFNGPASFPGFDDYNQQIGKTSAEDCNLHFMLDWQQLQLPIGLDPMLQPDMLGDQDLNFDMGAMGLGTQMEPILSINPELTNNMPPPLITPIETPKFDRSSSDLDAFSSGLHDRQYSVVSNQSVDSHYQAPPQPDPVVVAQDGWNVFRCVPSVHPSACPSTARWNLEALESTLQNHDGRSKWRPEVDENLFDGSDQLAVMQIHESTRDKLLAITQGFLHKALEIHRGNEAAQTYAPSNFVLLPPTKVLEYFLRSYTNSFERFYPLTSKGSLDANELMFCYQDRASSLLILLMVAQGAMNVPSREARSLTGGLVETCRISLFDLIERNIVMASDHNVLHAALIFTELASWSGDKWQMDIAMGQRGMYAAMLRHSGVLDRTTYPPQGSFSDGQTNADHMWNLWIQQESRSRPVYSWAMVDQELALFHGASPLFSVTEFGIALPHNEELWRAKSAGEWTSLMGQRVSTTDSDATASPPSLRDLSRRFLDDEMDSAECFLNPMHLRLLLLPLQAMVGHYQQLMCCFSDSGSSRVKNKTVTASSTRCRLEEVQCLLQRWYNIAMDYLKEHSVCSVMQASLVLYHLISLNAVTDFVQIERLARRETFDGTYQSLVWTHKRCITDVGEAIFHCGQVISLIRSMPRSVRPPWWAASIYRVALVLWCDSLIDKDGSSSYGGKSGQTFAVDALPSDHPLIQRYLNKGEGTPRLSKRDGSTIGLDHGLTVLNHCAEIIDEGATSRFQEGIRGKLDRLMRT.

2 consecutive C2H2-type zinc fingers follow at residues 2–24 (VFCTYCGHSFTRDEHLERHILTH) and 30–52 (FKCFTCHMSFARRDLLQGHYTVH). Positions 79-105 (CSNCAKTKTKCDKKFPCSRCASRNLRC) form a DNA-binding region, zn(2)-C6 fungal-type. The disordered stretch occupies residues 154–226 (PTGHVEESSK…SFPGFDDYNQ (73 aa)). Positions 163–178 (KSSSPSGSPTSISHNS) are enriched in low complexity.

The protein resides in the nucleus. In terms of biological role, elsinochromes biosynthesis cluster-specific transcription factor that positively regulates the expression of cluster genes including RDT1, PKS1, PRF1 and HP1, and subsequent elsinochromes production. The protein is Transcription factor 1 of Elsinoe fawcettii (Citrus scab fungus).